The following is a 161-amino-acid chain: pEARLI1-like lipid transfer protein 1 (161 aa).

The N-terminal stretch at 1–25 (MASKNSASLALFFALNILFFTLTVA) is a signal peptide. Residues 32–39 (PSPKPKPV) form an A-1 repeat. The disordered stretch occupies residues 32 to 76 (PSPKPKPVPSPKPKPVQCPPPPRPSVPSPNPRPVTPPRTPGSSGN). Residues 33-70 (SPKPKPVPSPKPKPVQCPPPPRPSVPSPNPRPVTPPRT) show a composition bias toward pro residues. Residues 34 to 49 (PKPKPVPSPKPKPVQC) form a 2 X 8 AA tandem repeats A of P-S-P-K-P-K-P-V region. An A-2 repeat occupies 40-47 (PSPKPKPV).

The protein belongs to the plant LTP family. PEARLI1 subfamily. As to quaternary structure, self-interacts and binds to DIR1. Interacts with PDLP1.

The protein resides in the secreted. It localises to the cell wall. It is found in the endoplasmic reticulum. Its subcellular location is the cell junction. The protein localises to the plasmodesma. The protein resides in the plastid. It localises to the chloroplast. Its function is as follows. Probable lipid transfer protein (LTP). Seems to control the flowering process and lignin synthesis. Together with DIR1, required for glycerol-3-phosphate- (G3P) and azelaic acid- (AA) induced systemic acquired resistance (SAR). Component of plant systemic immunity involved in priming defenses in a AA-dependent manner, by modulating production and/or translocation of a mobile signal(s) during SAR. Confers resistance to Botrytis cinerea and Pseudomonas syringae pv. tomato DC3000 and PmaDG3. May be involved in induced systemic resistance (ISR) mediated by non-pathogenic bacteria (e.g. P. fluorescens GM30). Prevents electrolyte leakage during freezing damage. In Arabidopsis thaliana (Mouse-ear cress), this protein is pEARLI1-like lipid transfer protein 1 (AZI1).